The primary structure comprises 472 residues: Argininosuccinate lyase (472 aa).

This sequence belongs to the lyase 1 family. Argininosuccinate lyase subfamily.

The protein resides in the cytoplasm. The enzyme catalyses 2-(N(omega)-L-arginino)succinate = fumarate + L-arginine. The protein operates within amino-acid biosynthesis; L-arginine biosynthesis; L-arginine from L-ornithine and carbamoyl phosphate: step 3/3. The chain is Argininosuccinate lyase from Mycolicibacterium paratuberculosis (strain ATCC BAA-968 / K-10) (Mycobacterium paratuberculosis).